Here is a 302-residue protein sequence, read N- to C-terminus: UDP-N-acetylenolpyruvoylglucosamine reductase (302 aa).

The region spanning 31–196 is the FAD-binding PCMH-type domain; that stretch reads KIGGPADVLA…LRAWISLERG (166 aa). The active site involves Arg175. The Proton donor role is filled by Ser225. Glu295 is an active-site residue.

This sequence belongs to the MurB family. It depends on FAD as a cofactor.

The protein resides in the cytoplasm. The catalysed reaction is UDP-N-acetyl-alpha-D-muramate + NADP(+) = UDP-N-acetyl-3-O-(1-carboxyvinyl)-alpha-D-glucosamine + NADPH + H(+). The protein operates within cell wall biogenesis; peptidoglycan biosynthesis. Its function is as follows. Cell wall formation. The protein is UDP-N-acetylenolpyruvoylglucosamine reductase of Caldanaerobacter subterraneus subsp. tengcongensis (strain DSM 15242 / JCM 11007 / NBRC 100824 / MB4) (Thermoanaerobacter tengcongensis).